A 272-amino-acid polypeptide reads, in one-letter code: Sulfur carrier protein FdhD (272 aa).

Residue C114 is the Cysteine persulfide intermediate of the active site.

Belongs to the FdhD family.

It localises to the cytoplasm. Functionally, required for formate dehydrogenase (FDH) activity. Acts as a sulfur carrier protein that transfers sulfur from IscS to the molybdenum cofactor prior to its insertion into FDH. This chain is Sulfur carrier protein FdhD, found in Mycolicibacterium paratuberculosis (strain ATCC BAA-968 / K-10) (Mycobacterium paratuberculosis).